The primary structure comprises 180 residues: Shikimate kinase (180 aa).

Residue 14-19 coordinates ATP; it reads GAGKSC. Ser-18 contributes to the Mg(2+) binding site. Asp-36, Arg-60, and Gly-82 together coordinate substrate. Position 120 (Arg-120) interacts with ATP. Arg-139 provides a ligand contact to substrate.

Belongs to the shikimate kinase family. As to quaternary structure, monomer. The cofactor is Mg(2+).

It localises to the cytoplasm. It catalyses the reaction shikimate + ATP = 3-phosphoshikimate + ADP + H(+). Its pathway is metabolic intermediate biosynthesis; chorismate biosynthesis; chorismate from D-erythrose 4-phosphate and phosphoenolpyruvate: step 5/7. Catalyzes the specific phosphorylation of the 3-hydroxyl group of shikimic acid using ATP as a cosubstrate. This is Shikimate kinase from Xanthomonas axonopodis pv. citri (strain 306).